A 237-amino-acid chain; its full sequence is ATP synthase subunit a (237 aa).

Helical transmembrane passes span 17-37 (LSDM…AVAA), 78-98 (LGVT…PFWL), 178-198 (ILLG…CGSI), and 201-221 (MVIM…AFIF).

This sequence belongs to the ATPase A chain family. As to quaternary structure, F-type ATPases have 2 components, CF(1) - the catalytic core - and CF(0) - the membrane proton channel. CF(1) has five subunits: alpha(3), beta(3), gamma(1), delta(1), epsilon(1). CF(0) has three main subunits: a(1), b(2) and c(9-12). The alpha and beta chains form an alternating ring which encloses part of the gamma chain. CF(1) is attached to CF(0) by a central stalk formed by the gamma and epsilon chains, while a peripheral stalk is formed by the delta and b chains.

It localises to the cell membrane. In terms of biological role, key component of the proton channel; it plays a direct role in the translocation of protons across the membrane. The polypeptide is ATP synthase subunit a (Bacillus caldotenax).